A 159-amino-acid chain; its full sequence is Acetolactate synthase small subunit (159 aa).

Residues 5-79 (ILSILLENES…DVLKVTEIED (75 aa)) enclose the ACT domain.

The protein belongs to the acetolactate synthase small subunit family. In terms of assembly, dimer of large and small chains.

It catalyses the reaction 2 pyruvate + H(+) = (2S)-2-acetolactate + CO2. The protein operates within amino-acid biosynthesis; L-isoleucine biosynthesis; L-isoleucine from 2-oxobutanoate: step 1/4. Its pathway is amino-acid biosynthesis; L-valine biosynthesis; L-valine from pyruvate: step 1/4. This chain is Acetolactate synthase small subunit (ilvH), found in Buchnera aphidicola subsp. Baizongia pistaciae (strain Bp).